A 366-amino-acid chain; its full sequence is tRNA/tmRNA (uracil-C(5))-methyltransferase (366 aa).

Positions 190, 218, 223, 239, and 299 each coordinate S-adenosyl-L-methionine. The active-site Nucleophile is the Cys324. Catalysis depends on Glu358, which acts as the Proton acceptor.

The protein belongs to the class I-like SAM-binding methyltransferase superfamily. RNA M5U methyltransferase family. TrmA subfamily.

It catalyses the reaction uridine(54) in tRNA + S-adenosyl-L-methionine = 5-methyluridine(54) in tRNA + S-adenosyl-L-homocysteine + H(+). It carries out the reaction uridine(341) in tmRNA + S-adenosyl-L-methionine = 5-methyluridine(341) in tmRNA + S-adenosyl-L-homocysteine + H(+). Dual-specificity methyltransferase that catalyzes the formation of 5-methyluridine at position 54 (m5U54) in all tRNAs, and that of position 341 (m5U341) in tmRNA (transfer-mRNA). The chain is tRNA/tmRNA (uracil-C(5))-methyltransferase from Escherichia coli O6:H1 (strain CFT073 / ATCC 700928 / UPEC).